A 901-amino-acid chain; its full sequence is MFSAIARKLFGSRNDRYLRSLQPLVDRINGLEAEYEALSDSELTAMTYAFKARLEKGETLDDLLPEAFAVVREGSKRVLGMRHYDVQLIGGIVLHQGKISEMKTGEGKTLVATLSLYLNALSGKGAHLVTVNDYLARRDAEWMGKLYQFLGLSVGVIIHGIEDQQRKAAYNADITYGTNNEFGFDYLRDNMKFSLEEMVQRPLNYAIVDEVDSILVDEARTPLIISGPTEDSTDKYYKVDRLIPQLEKERHYTLDEKQRSVTFTEEGNEQIEQLMRQAGLLRDGDLYDLHNIEMVHHVNQALKAHAMFEVDRDYIVKDGQVVIIDEFTGRMMPGRRYSDGLHQALEAKEQVVIQNESQTLASITFQNLFRLYNKLAGMTGTADTEAAEFQSIYNLEVVIIPTNRDMVRIDRDDMVFRTLEEKLKAVAEDIKVSYEKGQPVLVGTVSIEKSEMVSHFLKKLKIPHEILNAKHHEREAEIVAQAGRPRAVTIATNMAGRGTDIQLGGNLEMRLKKEIDPEASPAERTQQEIQIRTEYEQDKALVLASGGLHIIGTERHESRRIDNQLRGRAGRQGDPGSSGFYLSLQDDLMRIFGSERMDGMLKKLGLQDGEAIVHPWINKAVESAQKKVEGRNFDIRKNLLKFDDVMNEQRKVIYDQRKELMENEDIRDFIDEIREEVVHALVDSHLGEDVYPEEWDAKGFREAMLNQFNLDLNVESWKHEEGVTHLVAKERAMAAVKAYSEAREARLGPPLMRYLEKSIMLQVLDTLWKEHLLNMDHLKEGIHLRGYAQKDPLNEYKREAFQLFSMLLQRIREEAIEFLGKVEVQQPEEVAAYEAELAEARNQQMSLNHPESGSWGGEGEGPSSEGAPHLPFKRDGEKVGRNQACPCGSGKKYKQCCGKLS.

ATP contacts are provided by residues Gln87, 105 to 109 (GEGKT), and Asp500. Positions 847-901 (LNHPESGSWGGEGEGPSSEGAPHLPFKRDGEKVGRNQACPCGSGKKYKQCCGKLS) are disordered. The Zn(2+) site is built by Cys885, Cys887, Cys896, and Cys897.

The protein belongs to the SecA family. Monomer and homodimer. Part of the essential Sec protein translocation apparatus which comprises SecA, SecYEG and auxiliary proteins SecDF-YajC and YidC. Zn(2+) is required as a cofactor.

The protein resides in the cell inner membrane. It is found in the cytoplasm. It carries out the reaction ATP + H2O + cellular proteinSide 1 = ADP + phosphate + cellular proteinSide 2.. Its function is as follows. Part of the Sec protein translocase complex. Interacts with the SecYEG preprotein conducting channel. Has a central role in coupling the hydrolysis of ATP to the transfer of proteins into and across the cell membrane, serving both as a receptor for the preprotein-SecB complex and as an ATP-driven molecular motor driving the stepwise translocation of polypeptide chains across the membrane. The chain is Protein translocase subunit SecA 1 from Magnetococcus marinus (strain ATCC BAA-1437 / JCM 17883 / MC-1).